Reading from the N-terminus, the 212-residue chain is Ribosomal RNA large subunit methyltransferase E (212 aa).

Residues 1-10 (MATCRRRRRG) are compositionally biased toward basic residues. Residues 1–24 (MATCRRRRRGCNSQARRSRHESDP) are disordered. S-adenosyl-L-methionine contacts are provided by glycine 66, tryptophan 68, aspartate 86, aspartate 102, and aspartate 127. The Proton acceptor role is filled by lysine 167.

It belongs to the class I-like SAM-binding methyltransferase superfamily. RNA methyltransferase RlmE family.

The protein resides in the cytoplasm. The enzyme catalyses uridine(2552) in 23S rRNA + S-adenosyl-L-methionine = 2'-O-methyluridine(2552) in 23S rRNA + S-adenosyl-L-homocysteine + H(+). Functionally, specifically methylates the uridine in position 2552 of 23S rRNA at the 2'-O position of the ribose in the fully assembled 50S ribosomal subunit. This Halorhodospira halophila (strain DSM 244 / SL1) (Ectothiorhodospira halophila (strain DSM 244 / SL1)) protein is Ribosomal RNA large subunit methyltransferase E.